Reading from the N-terminus, the 277-residue chain is 3-methyl-2-oxobutanoate hydroxymethyltransferase (277 aa).

Residues D53 and D96 each coordinate Mg(2+). Residues 53–54 (DS), D96, and K126 each bind 3-methyl-2-oxobutanoate. Residue E128 coordinates Mg(2+). The active-site Proton acceptor is E195.

It belongs to the PanB family. Homodecamer; pentamer of dimers. Mg(2+) is required as a cofactor.

Its subcellular location is the cytoplasm. The catalysed reaction is 3-methyl-2-oxobutanoate + (6R)-5,10-methylene-5,6,7,8-tetrahydrofolate + H2O = 2-dehydropantoate + (6S)-5,6,7,8-tetrahydrofolate. It functions in the pathway cofactor biosynthesis; (R)-pantothenate biosynthesis; (R)-pantoate from 3-methyl-2-oxobutanoate: step 1/2. In terms of biological role, catalyzes the reversible reaction in which hydroxymethyl group from 5,10-methylenetetrahydrofolate is transferred onto alpha-ketoisovalerate to form ketopantoate. The chain is 3-methyl-2-oxobutanoate hydroxymethyltransferase from Chlorobium phaeobacteroides (strain BS1).